A 222-amino-acid polypeptide reads, in one-letter code: Dense granule protein 3 (222 aa).

The next 2 membrane-spanning stretches (helical) occupy residues 22–42 (LIPF…GGLA) and 162–182 (IPGY…RKVL). The short motif at 219-222 (KKQT) is the Prevents secretion from ER element.

As to quaternary structure, homodimer. Interacts (via N-terminus) with human host CAMLG (via N-terminus).

It is found in the cytoplasm. The protein resides in the host endoplasmic reticulum. Its subcellular location is the parasitophorous vacuole membrane. Functionally, direct host-parasite interaction occurs at the cytoplasmic faces of the parasitophorous vacuole membrane (PVM) and the host endoplasmic reticulum (ER) membrane via GRA3 and host CAMLG association. Direct insertion of GRA3 ER retrieval motif into the host ER membrane contributes to the host ER recruitment to the PVM. The sequence is that of Dense granule protein 3 from Toxoplasma gondii.